Consider the following 378-residue polypeptide: Transmembrane protein adipocyte-associated 1 homolog (378 aa).

N16, N25, and N36 each carry an N-linked (GlcNAc...) asparagine glycan. The next 7 helical transmembrane spans lie at 61 to 81, 88 to 108, 136 to 156, 164 to 184, 205 to 225, 247 to 267, and 278 to 298; these read VMLL…LPSA, TSSP…AVGI, FFLL…GHLE, VLAI…TLEI, HFWL…VILP, ILAL…ADII, and FLYF…GFFG. The tract at residues 316 to 335 is disordered; it reads DSDVHLPHTSSSGLGRKDLD.

Belongs to the UPF0359 family.

It is found in the membrane. The polypeptide is Transmembrane protein adipocyte-associated 1 homolog (tpra1) (Danio rerio (Zebrafish)).